We begin with the raw amino-acid sequence, 1497 residues long: Dual oxidase 1 (1497 aa).

The N-terminal stretch at 1 to 21 (MRSKHVLYIAILFSSIFGGKG) is a signal peptide. Over 22 to 587 (IQQNEEFQRY…MQSTYWTDND (566 aa)) the chain is Extracellular. Positions 26–590 (EEFQRYDGWY…TYWTDNDTTY (565 aa)) are peroxidase-like; mediates peroxidase activity. 4 N-linked (GlcNAc...) asparagine glycosylation sites follow: N66, N305, N567, and N586. The helical transmembrane segment at 588–608 (TTYVFTLIGLACVPLICYGIG) threads the bilayer. The Cytoplasmic segment spans residues 609–986 (RYLVNRRIAI…VSAFLETYRQ (378 aa)). EF-hand domains are found at residues 817–852 (ANNE…FVNA) and 853–888 (PQKQ…LNQT). The helical transmembrane segment at 987–1007 (HVFIVFCFVAINLVLFFERFW) threads the bilayer. Residues 1008 to 1024 (HYRYMAENRDLRRVMGA) lie on the Extracellular side of the membrane. The chain crosses the membrane as a helical span at residues 1025–1045 (GIAITRGAAGALSFCMALILL). The Ferric oxidoreductase domain occupies 1030-1210 (RGAAGALSFC…FVIDRIIGLM (181 aa)). Residues 1046-1068 (TVCRNIITLLRETVIAQYIPFDS) lie on the Cytoplasmic side of the membrane. Residues 1069 to 1089 (AIAFHKIVALFAAFWATLHTV) form a helical membrane-spanning segment. Over 1090–1134 (GHCVNFYHVGTQSQEGLACLFQEAFFGSNFLPSISYWFFSTITGL) the chain is Extracellular. A helical transmembrane segment spans residues 1135–1155 (TGIALVAVMCIIYVFALPCFI). Residues 1156–1163 (KRAYHAFR) are Cytoplasmic-facing. The helical transmembrane segment at 1164–1184 (LTHLLNIAFYALTLLHGLPKL) threads the bilayer. Residues 1185-1189 (LDSPK) lie on the Extracellular side of the membrane. A helical transmembrane segment spans residues 1190–1210 (FGYYVVGPIVLFVIDRIIGLM). The region spanning 1211–1318 (QYYKKLEIVN…KGPYGDGNQE (108 aa)) is the FAD-binding FR-type domain. The Cytoplasmic segment spans residues 1211–1497 (QYYKKLEIVN…PSFAHRFETF (287 aa)).

The protein in the N-terminal section; belongs to the peroxidase family. In terms of assembly, interacts with doxa-1 and tsp-15. Interacts with rho-1. As to expression, expressed in hypodermal cells.

The protein resides in the membrane. The enzyme catalyses NADH + O2 + H(+) = H2O2 + NAD(+). It catalyses the reaction NADPH + O2 + H(+) = H2O2 + NADP(+). Peroxidase activity is inhibited by aminobenzohydrazide. In terms of biological role, plays a role in cuticle biogenesis. In complex with doxa-1 and tsp-15, produces reactive oxygen species (ROS), which are probably used by mlt-7 for tyrosine cross-linking, thus stabilizing cuticular extracellular matrix. May regulate the production of ROS by playing a role in modulating proline catabolism. Required in combination with mlt-7 for correct formation of cross-links in cuticle collagens. Association with the GTPase rho-1 promotes ROS production and this interaction may be modulated by memo-1, in order to control the oxidative stress response and longevity. This is Dual oxidase 1 from Caenorhabditis elegans.